Here is a 436-residue protein sequence, read N- to C-terminus: Nicotinate phosphoribosyltransferase (436 aa).

H231 bears the Phosphohistidine; by autocatalysis mark.

The protein belongs to the NAPRTase family. Post-translationally, transiently phosphorylated on a His residue during the reaction cycle. Phosphorylation strongly increases the affinity for substrates and increases the rate of nicotinate D-ribonucleotide production. Dephosphorylation regenerates the low-affinity form of the enzyme, leading to product release.

It catalyses the reaction nicotinate + 5-phospho-alpha-D-ribose 1-diphosphate + ATP + H2O = nicotinate beta-D-ribonucleotide + ADP + phosphate + diphosphate. It functions in the pathway cofactor biosynthesis; NAD(+) biosynthesis; nicotinate D-ribonucleotide from nicotinate: step 1/1. Functionally, catalyzes the synthesis of beta-nicotinate D-ribonucleotide from nicotinate and 5-phospho-D-ribose 1-phosphate at the expense of ATP. The sequence is that of Nicotinate phosphoribosyltransferase from Vibrio parahaemolyticus serotype O3:K6 (strain RIMD 2210633).